Consider the following 96-residue polypeptide: Bublin coiled-coil protein (96 aa).

A coiled-coil region spans residues N39–A79. The tract at residues N63 to D96 is disordered. A compositionally biased stretch (basic and acidic residues) spans P87 to D96.

Belongs to the UPF0184 (EST00098) family.

It is found in the cell junction. The protein localises to the cytoplasm. The protein resides in the cytoskeleton. Its function is as follows. Essential for intermediate filament organization in intestinal cells, interacts with intermediate filament and regulates intestinal lumen morphology. This is Bublin coiled-coil protein (bbln) from Ctenopharyngodon idella (Grass carp).